Reading from the N-terminus, the 325-residue chain is Diacylglycerol acyltransferase/mycolyltransferase Ag85B (325 aa).

Positions Met-1–Ala-38 are cleaved as a signal peptide. Leu-82–Arg-83 contacts substrate. The interval Phe-98–Val-108 is fibronectin-binding. Residues Cys-127 and Cys-132 are joined by a disulfide bond. Position 166 (Ser-166) interacts with substrate. Ser-166 (nucleophile) is an active-site residue. The active site involves Glu-272. Residues Leu-274 to Arg-277 and His-304 to Trp-306 contribute to the substrate site. His-304 is a catalytic residue.

The protein belongs to the mycobacterial A85 antigen family.

Its subcellular location is the secreted. It catalyses the reaction 2 alpha,alpha'-trehalose 6-mycolate = alpha,alpha'-trehalose 6,6'-bismycolate + alpha,alpha-trehalose. It carries out the reaction an acyl-CoA + a 1,2-diacyl-sn-glycerol = a triacyl-sn-glycerol + CoA. The antigen 85 proteins (FbpA, FbpB, FbpC) are responsible for the high affinity of mycobacteria for fibronectin, a large adhesive glycoprotein. They also help to maintain the integrity of the cell wall by catalyzing the transfer of mycolic acids to cell wall arabinogalactan and through the synthesis of alpha,alpha-trehalose dimycolate (TDM, cord factor). They catalyze the transfer of a mycoloyl residue from one molecule of alpha,alpha-trehalose monomycolate (TMM) to another TMM, leading to the formation of TDM. This Mycolicibacterium smegmatis (strain ATCC 700084 / mc(2)155) (Mycobacterium smegmatis) protein is Diacylglycerol acyltransferase/mycolyltransferase Ag85B (fbpB).